The primary structure comprises 354 residues: ORC1-type DNA replication protein 9 (354 aa).

Residues 63–67, tyrosine 195, and arginine 207 each bind ATP; that span reads TGKTC.

It belongs to the CDC6/cdc18 family.

Functionally, involved in regulation of DNA replication. The polypeptide is ORC1-type DNA replication protein 9 (orc9-1) (Halobacterium salinarum (strain ATCC 700922 / JCM 11081 / NRC-1) (Halobacterium halobium)).